Consider the following 909-residue polypeptide: Cutinase transcription factor 1 alpha (909 aa).

Positions 1-51 (MSSGDAPPQAQPQPHQQEQPNQRQSSTPAPSAAPVPPAPSTSTSNSAGGVS) are disordered. The segment covering 12 to 30 (PQPHQQEQPNQRQSSTPAP) has biased composition (low complexity). The zn(2)-C6 fungal-type DNA-binding region spans 61–90 (CETCHARKVRCDAASLGVPCTNCVAFQIEC). Disordered regions lie at residues 95 to 159 (PKRK…EAQA), 651 to 757 (AEGK…SFSV), and 841 to 878 (LPQGFQGHTNMWQPNLDPNLPEGQSPDSWSSTSGQGQA). Positions 110 to 119 (KDSDSDRGDG) are enriched in basic and acidic residues. Residues 142 to 156 (VFHSHNGTPPTTLTE) show a composition bias toward polar residues. A compositionally biased stretch (basic and acidic residues) spans 669 to 683 (QHSRQQEAPKRKYDE). Composition is skewed to polar residues over residues 704-717 (PQTPSAVKAETSSM), 737-755 (GGTNSRPQTRPATPFNPSF), and 865-878 (SPDSWSSTSGQGQA).

It localises to the nucleus. The sequence is that of Cutinase transcription factor 1 alpha (CTF1-ALPHA) from Fusarium vanettenii (Neocosmospora pisi).